Reading from the N-terminus, the 509-residue chain is ATP synthase subunit alpha (509 aa).

171 to 178 (GDRKTGKT) contacts ATP.

Belongs to the ATPase alpha/beta chains family. F-type ATPases have 2 components, CF(1) - the catalytic core - and CF(0) - the membrane proton channel. CF(1) has five subunits: alpha(3), beta(3), gamma(1), delta(1), epsilon(1). CF(0) has three main subunits: a(1), b(2) and c(9-12). The alpha and beta chains form an alternating ring which encloses part of the gamma chain. CF(1) is attached to CF(0) by a central stalk formed by the gamma and epsilon chains, while a peripheral stalk is formed by the delta and b chains.

It localises to the cell inner membrane. It catalyses the reaction ATP + H2O + 4 H(+)(in) = ADP + phosphate + 5 H(+)(out). Produces ATP from ADP in the presence of a proton gradient across the membrane. The alpha chain is a regulatory subunit. In Ehrlichia chaffeensis (strain ATCC CRL-10679 / Arkansas), this protein is ATP synthase subunit alpha.